We begin with the raw amino-acid sequence, 212 residues long: Large ribosomal subunit protein uL3 (212 aa).

Residues 127–161 are disordered; it reads NFKRGPMAHGSKNHRLPGSTGAGTTPGRVFPGKRM.

It belongs to the universal ribosomal protein uL3 family. Part of the 50S ribosomal subunit. Forms a cluster with proteins L14 and L19.

Its function is as follows. One of the primary rRNA binding proteins, it binds directly near the 3'-end of the 23S rRNA, where it nucleates assembly of the 50S subunit. The polypeptide is Large ribosomal subunit protein uL3 (Thermosynechococcus vestitus (strain NIES-2133 / IAM M-273 / BP-1)).